A 381-amino-acid chain; its full sequence is Cytochrome b (381 aa).

A run of 4 helical transmembrane segments spans residues 38–58 (FGSLLGLCLLIQIVIGLFLAM), 82–103 (WLLRTVHANGASFFFICIYFHI), 118–138 (WMTGIALLFLVMAAAFLGYVL), and 183–203 (FFTFHFLIPFLVAGLTMIHLL). The heme b site is built by His-88 and His-102. His-187 and His-201 together coordinate heme b. His-206 is an a ubiquinone binding site. The next 4 helical transmembrane spans lie at 231–251 (IKDTVGFMVLIFFLVTLSLTS), 293–313 (LGGVIALVSSILILVSLPFTF), 325–345 (VAQPLFWSWVSVFLLLTWIGA), and 352–372 (YNFLGQILTCAYFSYFVFTPI).

The protein belongs to the cytochrome b family. In terms of assembly, the main subunits of complex b-c1 are: cytochrome b, cytochrome c1 and the Rieske protein. Requires heme b as cofactor.

Its subcellular location is the mitochondrion inner membrane. Component of the ubiquinol-cytochrome c reductase complex (complex III or cytochrome b-c1 complex) that is part of the mitochondrial respiratory chain. The b-c1 complex mediates electron transfer from ubiquinol to cytochrome c. Contributes to the generation of a proton gradient across the mitochondrial membrane that is then used for ATP synthesis. This is Cytochrome b (MT-CYB) from Artemia franciscana (Brine shrimp).